The primary structure comprises 302 residues: L-threonate dehydrogenase (302 aa).

NAD(+) contacts are provided by residues 7-35 (FHVG…TWGA) and T102. K178 is an active-site residue. K246 contacts NAD(+).

It belongs to the HIBADH-related family. L-threonate dehydrogenase subfamily.

It carries out the reaction L-threonate + NAD(+) = 2-dehydro-L-erythronate + NADH + H(+). In terms of biological role, catalyzes oxidation of L-threonate to 2-oxo-tetronate. Can use either NAD(+) or NADP(+) as cosubstrate, with a preference for NAD(+). This Escherichia coli O6:H1 (strain CFT073 / ATCC 700928 / UPEC) protein is L-threonate dehydrogenase.